Here is a 143-residue protein sequence, read N- to C-terminus: Large ribosomal subunit protein uL11 (143 aa).

The protein belongs to the universal ribosomal protein uL11 family. As to quaternary structure, part of the ribosomal stalk of the 50S ribosomal subunit. Interacts with L10 and the large rRNA to form the base of the stalk. L10 forms an elongated spine to which L12 dimers bind in a sequential fashion forming a multimeric L10(L12)X complex. In terms of processing, one or more lysine residues are methylated.

Functionally, forms part of the ribosomal stalk which helps the ribosome interact with GTP-bound translation factors. The protein is Large ribosomal subunit protein uL11 of Marinobacter nauticus (strain ATCC 700491 / DSM 11845 / VT8) (Marinobacter aquaeolei).